A 278-amino-acid polypeptide reads, in one-letter code: uncharacterized protein (278 aa).

Residues 1-16 (MFGLKVKDAQKDDQKS) show a composition bias toward basic and acidic residues. Disordered regions lie at residues 1 to 86 (MFGL…RGSN) and 98 to 126 (FGTT…TPWL). Low complexity-rich tracts occupy residues 33–45 (QGTS…RGSS) and 99–117 (GTTS…STPS).

The protein belongs to the adhesin P1 family.

This is an uncharacterized protein from Mycoplasma pneumoniae (strain ATCC 29342 / M129 / Subtype 1) (Mycoplasmoides pneumoniae).